Here is a 415-residue protein sequence, read N- to C-terminus: Gamma-glutamyl phosphate reductase (415 aa).

This sequence belongs to the gamma-glutamyl phosphate reductase family.

The protein resides in the cytoplasm. The enzyme catalyses L-glutamate 5-semialdehyde + phosphate + NADP(+) = L-glutamyl 5-phosphate + NADPH + H(+). It functions in the pathway amino-acid biosynthesis; L-proline biosynthesis; L-glutamate 5-semialdehyde from L-glutamate: step 2/2. Its function is as follows. Catalyzes the NADPH-dependent reduction of L-glutamate 5-phosphate into L-glutamate 5-semialdehyde and phosphate. The product spontaneously undergoes cyclization to form 1-pyrroline-5-carboxylate. The polypeptide is Gamma-glutamyl phosphate reductase (Bacillus mycoides (strain KBAB4) (Bacillus weihenstephanensis)).